Here is a 426-residue protein sequence, read N- to C-terminus: Serine--tRNA ligase (426 aa).

233–235 provides a ligand contact to L-serine; the sequence is TAE. Residue 264–266 participates in ATP binding; it reads RAE. E287 contacts L-serine. 351 to 354 contacts ATP; it reads EISS. S387 lines the L-serine pocket.

This sequence belongs to the class-II aminoacyl-tRNA synthetase family. Type-1 seryl-tRNA synthetase subfamily. As to quaternary structure, homodimer. The tRNA molecule binds across the dimer.

It localises to the cytoplasm. The catalysed reaction is tRNA(Ser) + L-serine + ATP = L-seryl-tRNA(Ser) + AMP + diphosphate + H(+). It carries out the reaction tRNA(Sec) + L-serine + ATP = L-seryl-tRNA(Sec) + AMP + diphosphate + H(+). Its pathway is aminoacyl-tRNA biosynthesis; selenocysteinyl-tRNA(Sec) biosynthesis; L-seryl-tRNA(Sec) from L-serine and tRNA(Sec): step 1/1. In terms of biological role, catalyzes the attachment of serine to tRNA(Ser). Is also able to aminoacylate tRNA(Sec) with serine, to form the misacylated tRNA L-seryl-tRNA(Sec), which will be further converted into selenocysteinyl-tRNA(Sec). The protein is Serine--tRNA ligase of Clostridium kluyveri (strain NBRC 12016).